The sequence spans 175 residues: Translation initiation factor IF-3 (175 aa).

It belongs to the IF-3 family. Monomer.

It localises to the cytoplasm. Functionally, IF-3 binds to the 30S ribosomal subunit and shifts the equilibrium between 70S ribosomes and their 50S and 30S subunits in favor of the free subunits, thus enhancing the availability of 30S subunits on which protein synthesis initiation begins. This chain is Translation initiation factor IF-3, found in Blochmanniella floridana.